A 162-amino-acid chain; its full sequence is Corticoliberin (162 aa).

Residues 1–24 form the signal peptide; that stretch reads MKFQLWVSTGILLVSLLPCHECRA. A propeptide spanning residues 25–119 is cleaved from the precursor; it reads FIKSPASSPG…QEDPTEKAKR (95 aa). Positions 91–122 are disordered; it reads SQPGMRAASLDGADSPYSAQEDPTEKAKRAEE. A compositionally biased stretch (basic and acidic residues) spans 113-122; it reads PTEKAKRAEE. Ile160 carries the isoleucine amide modification.

It belongs to the sauvagine/corticotropin-releasing factor/urotensin I family.

Its subcellular location is the secreted. Its function is as follows. This hormone from hypothalamus regulates the release of corticotropin from pituitary gland. The polypeptide is Corticoliberin (crh) (Xenopus laevis (African clawed frog)).